A 129-amino-acid polypeptide reads, in one-letter code: MGDLIFPINPGAALAIHVALSAGIVAAIIVVAAWLREKRSGARADVPYEGGVLPAAPQQGPVNAPYFLIAALFVIFDMEAAILFAWAVAARDTGWLGLIEAAVFIGVLLLALVYLWADGALDWHKERRR.

Transmembrane regions (helical) follow at residues Leu14–Trp34, Phe67–Ala87, and Trp95–Leu115.

Belongs to the complex I subunit 3 family. As to quaternary structure, NDH-1 is composed of 14 different subunits. Subunits NuoA, H, J, K, L, M, N constitute the membrane sector of the complex.

The protein localises to the cell inner membrane. The catalysed reaction is a quinone + NADH + 5 H(+)(in) = a quinol + NAD(+) + 4 H(+)(out). In terms of biological role, NDH-1 shuttles electrons from NADH, via FMN and iron-sulfur (Fe-S) centers, to quinones in the respiratory chain. The immediate electron acceptor for the enzyme in this species is believed to be ubiquinone. Couples the redox reaction to proton translocation (for every two electrons transferred, four hydrogen ions are translocated across the cytoplasmic membrane), and thus conserves the redox energy in a proton gradient. This chain is NADH-quinone oxidoreductase subunit A, found in Rhodopseudomonas palustris (strain BisB5).